Consider the following 416-residue polypeptide: Pectin acetylesterase 10 (416 aa).

The signal sequence occupies residues 1–20 (MRKLFLLGFIVAGLVLGNEA). Asn27 is a glycosylation site (N-linked (GlcNAc...) asparagine). Residues Ser198, Asp294, and His361 each act as charge relay system in the active site.

It belongs to the pectinacetylesterase family.

The protein localises to the secreted. Its subcellular location is the cell wall. Functionally, hydrolyzes acetyl esters in homogalacturonan regions of pectin. In type I primary cell wall, galacturonic acid residues of pectin can be acetylated at the O-2 and O-3 positions. Decreasing the degree of acetylation of pectin gels in vitro alters their physical properties. The polypeptide is Pectin acetylesterase 10 (Arabidopsis thaliana (Mouse-ear cress)).